We begin with the raw amino-acid sequence, 502 residues long: Protein DETOXIFICATION 55 (502 aa).

12 consecutive transmembrane segments (helical) span residues 30 to 50 (IWDI…KNMT), 61 to 81 (LELA…YSVL), 112 to 132 (IFLL…LAPL), 145 to 165 (VASL…FLHP), 185 to 205 (VSVL…SLGV), 207 to 227 (GVAV…LCYI), 261 to 283 (VWST…WWWY), 298 to 318 (VALA…TIPT), 344 to 364 (ATVA…GTTV), 378 to 398 (VVLE…LANC), 419 to 439 (INFY…AFVW), and 447 to 467 (CYGL…VVYN).

This sequence belongs to the multi antimicrobial extrusion (MATE) (TC 2.A.66.1) family.

It localises to the membrane. The polypeptide is Protein DETOXIFICATION 55 (Arabidopsis thaliana (Mouse-ear cress)).